A 417-amino-acid chain; its full sequence is Gap junction alpha-3 protein (417 aa).

The stretch at 2–15 (GDWSFLGRLLENAQ) is an intramembrane region. Residues 16–19 (EHST) are Cytoplasmic-facing. The helical transmembrane segment at 20–40 (VIGKVWLTVLFIFRILVLGAA) threads the bilayer. The Extracellular segment spans residues 41–71 (AEEVWGDEQSDFTCNTQQPGCENVCYDRAFP). 3 disulfides stabilise this stretch: C54–C198, C61–C192, and C65–C187. A helical membrane pass occupies residues 72–92 (ISHIRFWALQIIFVSTPTLIY). The Cytoplasmic segment spans residues 93–158 (LGHVLHIVRM…GALLRTYVFN (66 aa)). Basic and acidic residues predominate over residues 110-128 (EEELLRRDNPQHGRGREPM). The tract at residues 110 to 141 (EEELLRRDNPQHGRGREPMRTGSPRDPPLRDD) is disordered. A helical membrane pass occupies residues 159 to 179 (IIFKTLFEVGFIAGQYFLYGF). Residues 180 to 207 (QLQPLYRCDRWPCPNTVDCFISRPTEKT) are Extracellular-facing. Residues 208 to 228 (IFVIFMLAVACASLVLNMLEI) traverse the membrane as a helical segment. Residues 229–417 (YHLGWKKLKQ…GRARPGDLAI (189 aa)) lie on the Cytoplasmic side of the membrane. 2 disordered regions span residues 247-267 (DASEARHKPLDPLPTATSSGP) and 334-417 (RQVA…DLAI). Residues 342-353 (PASKPSSAASSP) are compositionally biased toward low complexity.

The protein belongs to the connexin family. Alpha-type (group II) subfamily. As to quaternary structure, a hemichannel or connexon is composed of a hexamer of connexins. A functional gap junction is formed by the apposition of two hemichannels. Forms heteromeric channels with GJA8.

The protein resides in the cell membrane. It is found in the cell junction. Its subcellular location is the gap junction. Its function is as follows. Structural component of lens fiber gap junctions. Gap junctions are dodecameric channels that connect the cytoplasm of adjoining cells. They are formed by the docking of two hexameric hemichannels, one from each cell membrane. Small molecules and ions diffuse from one cell to a neighboring cell via the central pore. This chain is Gap junction alpha-3 protein (Gja3), found in Mus musculus (Mouse).